The primary structure comprises 315 residues: Melanocyte-stimulating hormone receptor (315 aa).

Topologically, residues 1–35 are extracellular; that stretch reads MSTQEPQKSLLGSLNSNATSHLGLATNQSEPWCLY. N-linked (GlcNAc...) asparagine glycans are attached at residues Asn17 and Asn27. A helical transmembrane segment spans residues 36–61; that stretch reads VSIPDGLFLSLGLVSLVENVLVVIAI. Residues 62 to 70 lie on the Cytoplasmic side of the membrane; that stretch reads TKNRNLHSP. A helical transmembrane segment spans residues 71–91; it reads MYYFICCLALSDLMVSVSIVL. Residues 92-116 lie on the Extracellular side of the membrane; the sequence is ETTIILLLEAGILVARVALVQQLDN. A helical membrane pass occupies residues 117-138; sequence LIDVLICGSMVSSLCFLGIIAI. Residues 139 to 161 lie on the Cytoplasmic side of the membrane; that stretch reads DRYISIFYALRYHSIVTLPRARR. The helical transmembrane segment at 162–181 threads the bilayer; it reads AVVGIWMVSIVSSTLFITYY. Residues 182-189 lie on the Extracellular side of the membrane; that stretch reads KHTAVLLC. A helical transmembrane segment spans residues 190–209; it reads LVTFFLAMLALMAILYAHMF. Residues 210-238 are Cytoplasmic-facing; sequence TRACQHAQGIAQLHKRRRSIRQGFCLKGA. A helical transmembrane segment spans residues 239–264; it reads ATLTILLGIFFLCWGPFFLHLLLIVL. At 265 to 277 the chain is on the extracellular side; it reads CPQHPTCSCIFKN. A helical membrane pass occupies residues 278-298; sequence FNLFLLLIVLSSTVDPLIYAF. The Cytoplasmic segment spans residues 299–315; that stretch reads RSQELRMTLKEVLLCSW. Cys313 carries the S-palmitoyl cysteine lipid modification.

It belongs to the G-protein coupled receptor 1 family. As to quaternary structure, interacts with MGRN1, but does not undergo MGRN1-mediated ubiquitination; this interaction competes with GNAS-binding and thus inhibits agonist-induced cAMP production. Interacts with OPN3; the interaction results in a decrease in MC1R-mediated cAMP signaling and ultimately a decrease in melanin production in melanocytes.

It localises to the cell membrane. Its function is as follows. Receptor for MSH (alpha, beta and gamma) and ACTH. The activity of this receptor is mediated by G proteins which activate adenylate cyclase. Mediates melanogenesis, the production of eumelanin (black/brown) and phaeomelanin (red/yellow), via regulation of cAMP signaling in melanocytes. This chain is Melanocyte-stimulating hormone receptor (Mc1r), found in Mus musculus (Mouse).